Here is a 274-residue protein sequence, read N- to C-terminus: Large ribosomal subunit protein uL2 (274 aa).

The disordered stretch occupies residues 224-256 (VMNPVDHPHGGGEGKTGEGRHPVDPWGNLTKGY). Residues 229 to 246 (DHPHGGGEGKTGEGRHPV) show a composition bias toward basic and acidic residues.

Belongs to the universal ribosomal protein uL2 family. Part of the 50S ribosomal subunit. Forms a bridge to the 30S subunit in the 70S ribosome.

One of the primary rRNA binding proteins. Required for association of the 30S and 50S subunits to form the 70S ribosome, for tRNA binding and peptide bond formation. It has been suggested to have peptidyltransferase activity; this is somewhat controversial. Makes several contacts with the 16S rRNA in the 70S ribosome. The sequence is that of Large ribosomal subunit protein uL2 from Polaromonas sp. (strain JS666 / ATCC BAA-500).